The primary structure comprises 248 residues: Protein G1-like6 (248 aa).

Basic residues predominate over residues 1-15 (MDRHHHHHHHHHHHM). 3 disordered regions span residues 1 to 35 (MDRH…GATQ), 50 to 84 (GAGS…YESQ), and 198 to 248 (ARGI…FIIP). The span at 17–32 (SGGGQDPAAGDGGAGG) shows a compositional bias: gly residues. Over residues 50 to 59 (GAGSSSSGAG) the composition is skewed to low complexity. Positions 60 to 69 (TSAGGGGGGP) are enriched in gly residues. Low complexity predominate over residues 70–79 (SPSSSSPSLS). In terms of domain architecture, ALOG spans 80 to 207 (RYESQKRRDW…ARGISYEKKK (128 aa)). The Nuclear localization signal signature appears at 205-209 (KKKRK). Low complexity-rich tracts occupy residues 212–224 (SSAG…SSEG) and 239–248 (TSASPQFIIP).

The protein belongs to the plant homeotic and developmental regulators ALOG protein family.

The protein resides in the nucleus. Functionally, probable transcription regulator that acts as a developmental regulator by promoting cell growth in response to light. This chain is Protein G1-like6, found in Oryza sativa subsp. indica (Rice).